The sequence spans 210 residues: Holliday junction resolvase RecU (210 aa).

Mg(2+) is bound by residues Thr87, Asp89, Glu102, and Gln121.

This sequence belongs to the RecU family. Mg(2+) serves as cofactor.

It is found in the cytoplasm. It carries out the reaction Endonucleolytic cleavage at a junction such as a reciprocal single-stranded crossover between two homologous DNA duplexes (Holliday junction).. Functionally, endonuclease that resolves Holliday junction intermediates in genetic recombination. Cleaves mobile four-strand junctions by introducing symmetrical nicks in paired strands. Promotes annealing of linear ssDNA with homologous dsDNA. Required for DNA repair, homologous recombination and chromosome segregation. The protein is Holliday junction resolvase RecU of Lactobacillus delbrueckii subsp. bulgaricus (strain ATCC 11842 / DSM 20081 / BCRC 10696 / JCM 1002 / NBRC 13953 / NCIMB 11778 / NCTC 12712 / WDCM 00102 / Lb 14).